A 530-amino-acid chain; its full sequence is MFSQFFILNNKGETIIFKDYRFDISKDSNEIFFKHVQSMKSEITPAFNIDGINYLYIKKREMYFVFTTRLLVSPSLGFELLNRASKIIQDYTASLTEEAIRLNFILIYELLDELMDYGVPQSTGTETLKAFVFTPPKQIKSKQLESDSIIDNFLKATNKISVPPKQGVKPIHSGSKNSSSGGSSLSTNTVSKVVNNIVDSISGAATNLHNSTSGGGSGSGVTDADGDNEIYIDLCERLTVLYSSNGTILRNEITGKIQMKSYLRGNPALSLGLSPEFTFKTIANRDESNENEIDNNNIGGVSNLSAPSSNTTSFIVDDCSFHECAGSGFQPNNTINFKPPQGDFTLLKYRISNNNYTPFLVKTNLESTIRNRFDLVVTIRSNFSNKVVPNFIFVSIPVPKSTKSLTHSLDYGSQNQKVEYKQSTQAGNLVFWSIKKLRGGMETILRIQIHVDGATSSSSNNNQQQQQPQIDVGSTLRKEIGPIGLEFSIPQFSCSTLQIKFLKMLGSNISPIRWIRYITDSKSFVSRINN.

The tract at residues 164-187 is disordered; that stretch reads PKQGVKPIHSGSKNSSSGGSSLST. Residues 173–186 are compositionally biased toward low complexity; the sequence is SGSKNSSSGGSSLS. One can recognise an MHD domain in the interval 227–527; sequence DNEIYIDLCE…ITDSKSFVSR (301 aa).

This sequence belongs to the adaptor complexes medium subunit family. In terms of assembly, may be part of the adaptor protein complex 4 (AP-4), a heterotetramer composed of two large adaptins (epsilon-type subunitand beta-type subunit), a medium adaptin (mu-type subunit) and a small adaptin (sigma-type).

The protein localises to the golgi apparatus. The protein resides in the trans-Golgi network membrane. It is found in the early endosome. Its function is as follows. Probable component of an adaptor protein complex. Adaptor protein complexes are vesicle coat components involved both in vesicle formation and cargo selection. They control the vesicular transport of proteins in different trafficking pathways. This Dictyostelium discoideum (Social amoeba) protein is AP-4 complex subunit mu (apm4).